The chain runs to 535 residues: Inositol 1,4,5-trisphosphate receptor-interacting protein-like 2 (535 aa).

A signal peptide spans 1–32 (MSVRYTLNLRVFWPLVTGLCTALVCLYHALRS). At 33–43 (SEDARAESPDG) the chain is on the extracellular side. The chain crosses the membrane as a helical span at residues 44–64 (ADSGFPLLKVAILLLLGYILL). Over 65–535 (RCRHAIRQRL…RIQGSPEDEP (471 aa)) the chain is Cytoplasmic. Serine 139 carries the phosphoserine modification.

The protein belongs to the ITPRIP family.

The protein resides in the membrane. The sequence is that of Inositol 1,4,5-trisphosphate receptor-interacting protein-like 2 (Itpripl2) from Mus musculus (Mouse).